A 148-amino-acid polypeptide reads, in one-letter code: Large ribosomal subunit protein bL27m (148 aa).

Residues 1-30 (MAAAALTLRTRAAVTALLSPTAPTALAVRH) constitute a mitochondrion transit peptide. Residues 28–48 (VRHASKKTGGSSKNLGGKSRG) form a disordered region.

It belongs to the bacterial ribosomal protein bL27 family. As to quaternary structure, component of the mitochondrial ribosome large subunit (39S) which comprises a 16S rRNA and about 50 distinct proteins.

The protein localises to the mitochondrion. In Mus musculus (Mouse), this protein is Large ribosomal subunit protein bL27m (Mrpl27).